The following is a 158-amino-acid chain: Transcription elongation factor GreA (158 aa).

Residues 45–73 are a coiled coil; it reads AEYHAAREQQSFIEGRIKQLESELSHAEI.

Belongs to the GreA/GreB family.

In terms of biological role, necessary for efficient RNA polymerase transcription elongation past template-encoded arresting sites. The arresting sites in DNA have the property of trapping a certain fraction of elongating RNA polymerases that pass through, resulting in locked ternary complexes. Cleavage of the nascent transcript by cleavage factors such as GreA or GreB allows the resumption of elongation from the new 3'terminus. GreA releases sequences of 2 to 3 nucleotides. The polypeptide is Transcription elongation factor GreA (Xanthomonas axonopodis pv. citri (strain 306)).